A 123-amino-acid polypeptide reads, in one-letter code: Defensin beta 118 (123 aa).

Positions 1–19 (MKLLLLALPMLVLLPQVIP) are cleaved as a signal peptide. 3 disulfides stabilise this stretch: C27–C54, C34–C48, and C38–C55. Positions 65–123 (VPATSPTPLSDSTPGIIDDILTVRFTTDYFEVSSKKDMVEESEAGRGTETSLPNVHHSS) are excised as a propeptide. A compositionally biased stretch (basic and acidic residues) spans 100-110 (KDMVEESEAGR). Residues 100 to 123 (KDMVEESEAGRGTETSLPNVHHSS) are disordered. Positions 112–123 (TETSLPNVHHSS) are enriched in polar residues.

The protein belongs to the beta-defensin family. Post-translationally, the three-dimensional structure formed by the three intramolecular disulfide bridges is indispensable for antimicrobial activity. As to expression, high-level and epididymis-specific expression. Most abundant in the epithelium of the caput and present in the epididymis lumen and bound to sperm. Also expressed in pancreas.

It is found in the secreted. Functionally, host defense peptide that exhibits antimicrobial activity against both Gram-negative bacteria, such as E.coli and S.typhimurium, and Gram-positive bacteria, such as S.aureus and B.subtilis. Inhibits cell adhesion of E.coli on intestinal epithelial enterocytes. Causes rapid permeabilization of both the outer and inner membrane of E.coli, leading to morphological alterations on the bacterial surface. Binds to bacterial lipopolysaccharides (LPS) with high affinity, and may thereby be involved in immunoregulation through LPS neutralization. May contribute to epididymal innate immunity and protect the sperm against attack by microorganisms. The sequence is that of Defensin beta 118 (DEFB118) from Homo sapiens (Human).